A 296-amino-acid polypeptide reads, in one-letter code: MPEVDNVIKEKLKLLVEMDPKKMIIYPLIVFGIAIIIIIANYVMTGSFVKEGIELRGGSVITLQGVNVSPDEIAKSIKEKTGIDVTVEKFSGVGGSGVRVYVSAGDDVNLVREALKEMFPDVEPQTVVIGPTFGEIVREQGIKAIVYAFIGMAIVVFLFFRVPVPSMTVVFSAFSDMIIAIALMNIFGIELSQATIAALLMLIGYSVDSNILLTTRLLRRKEFTVEEAYYSSLKTGFTMSTTTLGALASLWIFSTAQVIDDIASVLIFGLLADFMNTWILNAGVLRLYIAKREGKE.

Transmembrane regions (helical) follow at residues 23-43, 144-164, 169-189, 194-214, 236-256, and 265-285; these read MIIY…ANYV, AIVY…RVPV, VVFS…IFGI, ATIA…ILLT, GFTM…FSTA, and VLIF…AGVL.

It belongs to the SecD/SecF family. SecF subfamily. Part of the protein translocation apparatus. Forms a complex with SecD.

The protein localises to the cell membrane. Functionally, involved in protein export. This is Protein-export membrane protein SecF from Pyrococcus furiosus (strain ATCC 43587 / DSM 3638 / JCM 8422 / Vc1).